A 472-amino-acid chain; its full sequence is Uronate isomerase (472 aa).

Belongs to the metallo-dependent hydrolases superfamily. Uronate isomerase family.

The catalysed reaction is D-glucuronate = D-fructuronate. It catalyses the reaction aldehydo-D-galacturonate = keto-D-tagaturonate. The protein operates within carbohydrate metabolism; pentose and glucuronate interconversion. The sequence is that of Uronate isomerase from Oceanobacillus iheyensis (strain DSM 14371 / CIP 107618 / JCM 11309 / KCTC 3954 / HTE831).